Reading from the N-terminus, the 306-residue chain is L-lactate dehydrogenase (306 aa).

Residues Val-11, Asp-32, Lys-37, and 76–77 (GA) contribute to the NAD(+) site. Substrate is bound by residues Gln-79 and Arg-85. Residues Ser-98, 115–117 (VSN), and Ser-140 contribute to the NAD(+) site. Residue 117–120 (NPVD) coordinates substrate. 145–148 (DTAR) serves as a coordination point for substrate. Beta-D-fructose 1,6-bisphosphate contacts are provided by Arg-150 and His-165. The active-site Proton acceptor is His-172. Position 214 is a phosphotyrosine (Tyr-214). Thr-223 lines the substrate pocket.

Belongs to the LDH/MDH superfamily. LDH family. Homotetramer.

It is found in the cytoplasm. It catalyses the reaction (S)-lactate + NAD(+) = pyruvate + NADH + H(+). It participates in fermentation; pyruvate fermentation to lactate; (S)-lactate from pyruvate: step 1/1. Its activity is regulated as follows. Allosterically activated by fructose 1,6-bisphosphate (FBP). Its function is as follows. Catalyzes the conversion of lactate to pyruvate. In Synechococcus sp. (strain JA-3-3Ab) (Cyanobacteria bacterium Yellowstone A-Prime), this protein is L-lactate dehydrogenase.